The sequence spans 217 residues: Homeobox protein Hox-B7 (217 aa).

Residues 126–131 (IYPWMR) carry the Antp-type hexapeptide motif. The segment at residues 137–196 (RKRGRQTYTRYQTLELEKEFHYNRYLTRRRRIEIAHTLCLTERQIKIWFQNRRMKWKKEN) is a DNA-binding region (homeobox). A disordered region spans residues 194–217 (KENKTAGPGTTGQDRAEAEEEEEE).

The protein belongs to the Antp homeobox family. As to quaternary structure, forms a DNA-binding heterodimer with transcription factor PBX1.

It localises to the nucleus. Its function is as follows. Sequence-specific transcription factor which is part of a developmental regulatory system that provides cells with specific positional identities on the anterior-posterior axis. The protein is Homeobox protein Hox-B7 (HOXB7) of Homo sapiens (Human).